A 115-amino-acid polypeptide reads, in one-letter code: NAD(P)H-quinone oxidoreductase subunit M (115 aa).

The protein belongs to the complex I NdhM subunit family. In terms of assembly, NDH-1 can be composed of about 15 different subunits; different subcomplexes with different compositions have been identified which probably have different functions.

The protein localises to the cellular thylakoid membrane. It catalyses the reaction a plastoquinone + NADH + (n+1) H(+)(in) = a plastoquinol + NAD(+) + n H(+)(out). The catalysed reaction is a plastoquinone + NADPH + (n+1) H(+)(in) = a plastoquinol + NADP(+) + n H(+)(out). In terms of biological role, NDH-1 shuttles electrons from an unknown electron donor, via FMN and iron-sulfur (Fe-S) centers, to quinones in the respiratory and/or the photosynthetic chain. The immediate electron acceptor for the enzyme in this species is believed to be plastoquinone. Couples the redox reaction to proton translocation, and thus conserves the redox energy in a proton gradient. Cyanobacterial NDH-1 also plays a role in inorganic carbon-concentration. In Synechococcus sp. (strain CC9605), this protein is NAD(P)H-quinone oxidoreductase subunit M.